The primary structure comprises 120 residues: Large ribosomal subunit protein uL24 (120 aa).

The segment at 1 to 33 (MTRQPHKQRNRQERAALHEKQKQVRAPLSPELR) is disordered. Residues 10–22 (NRQERAALHEKQK) show a composition bias toward basic and acidic residues.

It belongs to the universal ribosomal protein uL24 family. In terms of assembly, part of the 50S ribosomal subunit.

Functionally, one of two assembly initiator proteins, it binds directly to the 5'-end of the 23S rRNA, where it nucleates assembly of the 50S subunit. Its function is as follows. Located at the polypeptide exit tunnel on the outside of the subunit. The polypeptide is Large ribosomal subunit protein uL24 (Natronomonas pharaonis (strain ATCC 35678 / DSM 2160 / CIP 103997 / JCM 8858 / NBRC 14720 / NCIMB 2260 / Gabara) (Halobacterium pharaonis)).